The primary structure comprises 98 residues: Small ribosomal subunit protein eS24 (98 aa).

The protein belongs to the eukaryotic ribosomal protein eS24 family.

This chain is Small ribosomal subunit protein eS24 (rps2e), found in Thermoplasma acidophilum (strain ATCC 25905 / DSM 1728 / JCM 9062 / NBRC 15155 / AMRC-C165).